The sequence spans 335 residues: Prepilin leader peptidase/N-methyltransferase (335 aa).

A helical membrane pass occupies residues leucine 13–isoleucine 33. Residues cysteine 49, cysteine 52, cysteine 74, and cysteine 77 each contribute to the Zn(2+) site. The next 5 membrane-spanning stretches (helical) occupy residues tryptophan 105–isoleucine 125, isoleucine 131–leucine 151, leucine 206–leucine 226, proline 258–isoleucine 278, and isoleucine 299–leucine 319.

Belongs to the peptidase A24 family. Zn(2+) is required as a cofactor.

It is found in the cell inner membrane. The catalysed reaction is Typically cleaves a -Gly-|-Phe- bond to release an N-terminal, basic peptide of 5-8 residues from type IV prepilin, and then N-methylates the new N-terminal amino group, the methyl donor being S-adenosyl-L-methionine.. Its function is as follows. Plays an essential role in type IV pili and type II pseudopili formation by proteolytically removing the leader sequence from substrate proteins and subsequently monomethylating the alpha-amino group of the newly exposed N-terminal phenylalanine. In Myxococcus xanthus (strain DK1622), this protein is Prepilin leader peptidase/N-methyltransferase (pilD).